The chain runs to 807 residues: Glycerol-3-phosphate acyltransferase (807 aa).

Positions 305-310 (CHRSHM) match the HXXXXD motif motif.

Belongs to the GPAT/DAPAT family.

The protein resides in the cell inner membrane. It catalyses the reaction sn-glycerol 3-phosphate + an acyl-CoA = a 1-acyl-sn-glycero-3-phosphate + CoA. Its pathway is phospholipid metabolism; CDP-diacylglycerol biosynthesis; CDP-diacylglycerol from sn-glycerol 3-phosphate: step 1/3. This chain is Glycerol-3-phosphate acyltransferase, found in Aliivibrio fischeri (strain ATCC 700601 / ES114) (Vibrio fischeri).